The primary structure comprises 249 residues: MSSIGTGYDLSVTTFSPDGRVFQIEYAAKAVDNSGTAVGIKCKDGIVLGVEKLIQSKMMLPGSNRRIHSVHRHSGMAVAGLAADGRQIVARAKSEATNYESVYGEAVPVKELADRVASYVHLCTLYWWLRPFGCGVILGGYDRDGPQLYMVEPSGISYRYFGAAIGKGKQAAKTEIEKLKLSEMTCREGIIEVAKIIYKVHDEAKDKAFELEMSWICDESKREHQKVPDNLLQEAKAAATAALEEMDAD.

It belongs to the peptidase T1A family. As to quaternary structure, the 26S proteasome consists of a 20S proteasome core and two 19S regulatory subunits. The 20S proteasome core is composed of 28 subunits that are arranged in four stacked rings, resulting in a barrel-shaped structure. The two end rings are each formed by seven alpha subunits, and the two central rings are each formed by seven beta subunits. The catalytic chamber with the active sites is on the inside of the barrel.

It is found in the cytoplasm. It localises to the nucleus. Functionally, the proteasome is a multicatalytic proteinase complex which is characterized by its ability to cleave peptides with Arg, Phe, Tyr, Leu, and Glu adjacent to the leaving group at neutral or slightly basic pH. The proteasome has an ATP-dependent proteolytic activity. The protein is Proteasome subunit alpha type-3 (PAG1) of Spinacia oleracea (Spinach).